A 704-amino-acid polypeptide reads, in one-letter code: Elongation factor G (704 aa).

Positions K10–M286 constitute a tr-type G domain. GTP is bound by residues A19–T26, D83–H87, and N137–D140.

This sequence belongs to the TRAFAC class translation factor GTPase superfamily. Classic translation factor GTPase family. EF-G/EF-2 subfamily.

The protein resides in the cytoplasm. Its function is as follows. Catalyzes the GTP-dependent ribosomal translocation step during translation elongation. During this step, the ribosome changes from the pre-translocational (PRE) to the post-translocational (POST) state as the newly formed A-site-bound peptidyl-tRNA and P-site-bound deacylated tRNA move to the P and E sites, respectively. Catalyzes the coordinated movement of the two tRNA molecules, the mRNA and conformational changes in the ribosome. This Corynebacterium jeikeium (strain K411) protein is Elongation factor G.